The primary structure comprises 202 residues: Holliday junction branch migration complex subunit RuvA (202 aa).

Residues 1 to 65 (MIGYLEGRVV…EDALELFGFA (65 aa)) form a domain I region. The interval 66–144 (SLDDRETFRT…GRAPAAGLAP (79 aa)) is domain II. The segment at 145–155 (SVPIPGGVAGD) is flexible linker. The domain III stretch occupies residues 155-202 (DVVAGLTNLGYPEPEARQVAAEVLEAEPDLDVAAALRQALKRLASAKK).

The protein belongs to the RuvA family. In terms of assembly, homotetramer. Forms an RuvA(8)-RuvB(12)-Holliday junction (HJ) complex. HJ DNA is sandwiched between 2 RuvA tetramers; dsDNA enters through RuvA and exits via RuvB. An RuvB hexamer assembles on each DNA strand where it exits the tetramer. Each RuvB hexamer is contacted by two RuvA subunits (via domain III) on 2 adjacent RuvB subunits; this complex drives branch migration. In the full resolvosome a probable DNA-RuvA(4)-RuvB(12)-RuvC(2) complex forms which resolves the HJ.

It is found in the cytoplasm. Functionally, the RuvA-RuvB-RuvC complex processes Holliday junction (HJ) DNA during genetic recombination and DNA repair, while the RuvA-RuvB complex plays an important role in the rescue of blocked DNA replication forks via replication fork reversal (RFR). RuvA specifically binds to HJ cruciform DNA, conferring on it an open structure. The RuvB hexamer acts as an ATP-dependent pump, pulling dsDNA into and through the RuvAB complex. HJ branch migration allows RuvC to scan DNA until it finds its consensus sequence, where it cleaves and resolves the cruciform DNA. The protein is Holliday junction branch migration complex subunit RuvA of Solidesulfovibrio magneticus (strain ATCC 700980 / DSM 13731 / RS-1) (Desulfovibrio magneticus).